Here is a 153-residue protein sequence, read N- to C-terminus: 3-hydroxyacyl-[acyl-carrier-protein] dehydratase FabZ (153 aa).

His-59 is a catalytic residue.

The protein belongs to the thioester dehydratase family. FabZ subfamily.

The protein localises to the cytoplasm. It catalyses the reaction a (3R)-hydroxyacyl-[ACP] = a (2E)-enoyl-[ACP] + H2O. In terms of biological role, involved in unsaturated fatty acids biosynthesis. Catalyzes the dehydration of short chain beta-hydroxyacyl-ACPs and long chain saturated and unsaturated beta-hydroxyacyl-ACPs. This Thermosynechococcus vestitus (strain NIES-2133 / IAM M-273 / BP-1) protein is 3-hydroxyacyl-[acyl-carrier-protein] dehydratase FabZ.